We begin with the raw amino-acid sequence, 330 residues long: tRNA N6-adenosine threonylcarbamoyltransferase (330 aa).

The Fe cation site is built by His-110 and His-114. Residues 133–137, Asp-166, Gly-179, and Asn-268 contribute to the substrate site; that span reads LVSGG. Fe cation is bound at residue Asp-296.

The protein belongs to the KAE1 / TsaD family. Fe(2+) serves as cofactor.

The protein localises to the cytoplasm. It catalyses the reaction L-threonylcarbamoyladenylate + adenosine(37) in tRNA = N(6)-L-threonylcarbamoyladenosine(37) in tRNA + AMP + H(+). Required for the formation of a threonylcarbamoyl group on adenosine at position 37 (t(6)A37) in tRNAs that read codons beginning with adenine. Is involved in the transfer of the threonylcarbamoyl moiety of threonylcarbamoyl-AMP (TC-AMP) to the N6 group of A37, together with TsaE and TsaB. TsaD likely plays a direct catalytic role in this reaction. The protein is tRNA N6-adenosine threonylcarbamoyltransferase of Kosmotoga olearia (strain ATCC BAA-1733 / DSM 21960 / TBF 19.5.1).